A 342-amino-acid polypeptide reads, in one-letter code: Methionine import ATP-binding protein MetN 2 (342 aa).

The ABC transporter domain maps to 2 to 241 (ISIEGLSKVF…PKQLVTRKFV (240 aa)). 38–45 (GYSGAGKS) is an ATP binding site.

The protein belongs to the ABC transporter superfamily. Methionine importer (TC 3.A.1.24) family. The complex is composed of two ATP-binding proteins (MetN), two transmembrane proteins (MetI) and a solute-binding protein (MetQ).

The protein resides in the cell membrane. It catalyses the reaction L-methionine(out) + ATP + H2O = L-methionine(in) + ADP + phosphate + H(+). The catalysed reaction is D-methionine(out) + ATP + H2O = D-methionine(in) + ADP + phosphate + H(+). Functionally, part of the ABC transporter complex MetNIQ involved in methionine import. Responsible for energy coupling to the transport system. The sequence is that of Methionine import ATP-binding protein MetN 2 from Oceanobacillus iheyensis (strain DSM 14371 / CIP 107618 / JCM 11309 / KCTC 3954 / HTE831).